Consider the following 44-residue polypeptide: uncharacterized protein (44 aa).

It is found in the plastid. It localises to the chloroplast. This is an uncharacterized protein from Trieres chinensis (Marine centric diatom).